A 511-amino-acid chain; its full sequence is MVLLAAAVCTKAGKAIVSRQFVEMTRTRIEGLLAAFPKLMNTGKQHTFVETESVRYVYQPMEKLYMVLITTKNSNILEDLETLRLFSRVIPEYCRALEENEISEHCFDLIFAFDEIVALGYRENVNLAQIRTFTEMDSHEEKVFRAVRETQEREAKAEMRRKAKELQQARRDAERQGKKAPGFGGFGSSTVSGGSTTSMITETIIETDKPKVAPAPARPSGPSKALKLGAKGKEVDNFVDKLKSEGENIISSNMGKRTSEATKVHAPPINMESVHMKIEEKITLTCGRDGGLQNMELHGMIMLRISDDKFGRIRLHVENEDKKGVQLQTHPNVDKKLFTAESLIGLKNPEKSFPVNSDVGVLKWRLQTTEESFIPLTINCWPSESGNGCDVNIEYELQEDNLELNDVVITIPLPSGVGAPVIGEIDGEYRHDSRRNTLEWCLPVIDAKNKSGSLEFSIAGQPNDFFPVQVSFISKKNYCNIQVTKVTQVDGNSPVRFSTETTFLVDKYEIL.

Basic and acidic residues predominate over residues 168–177; sequence QARRDAERQG. Residues 168–196 form a disordered region; the sequence is QARRDAERQGKKAPGFGGFGSSTVSGGST. A Phosphoserine modification is found at Ser223. N6-acetyllysine is present on residues Lys233 and Lys241. Residue Ser244 is modified to Phosphoserine. The region spanning 271–511 is the MHD domain; the sequence is MESVHMKIEE…TFLVDKYEIL (241 aa). N6-acetyllysine occurs at positions 309 and 351. A Phosphoserine modification is found at Ser493.

Belongs to the adaptor complexes medium subunit family. Delta-COP subfamily. In terms of assembly, oligomeric complex that consists of at least the alpha, beta, beta', gamma, delta, epsilon and zeta subunits. Ubiquitously expressed.

It is found in the cytoplasm. Its subcellular location is the golgi apparatus membrane. The protein resides in the cytoplasmic vesicle. It localises to the COPI-coated vesicle membrane. In terms of biological role, the coatomer is a cytosolic protein complex that binds to dilysine motifs and reversibly associates with Golgi non-clathrin-coated vesicles, which further mediate biosynthetic protein transport from the ER, via the Golgi up to the trans Golgi network. Coatomer complex is required for budding from Golgi membranes, and is essential for the retrograde Golgi-to-ER transport of dilysine-tagged proteins. In mammals, the coatomer can only be recruited by membranes associated to ADP-ribosylation factors (ARFs), which are small GTP-binding proteins; the complex also influences the Golgi structural integrity, as well as the processing, activity, and endocytic recycling of LDL receptors. In Bos taurus (Bovine), this protein is Coatomer subunit delta (ARCN1).